The primary structure comprises 32 residues: Seminal plasma protein PDC-109 (32 aa).

Positions 1–32 (DQDEGVSTEPTQVGPAELHNDETCVGPLVYRN) are disordered. Thr11 carries O-linked (GalNAc...) threonine glycosylation. In terms of domain architecture, Fibronectin type-II spans 19–32 (HNDETCVGPLVYRN).

Belongs to the seminal plasma protein family. As to quaternary structure, homodimer.

The protein localises to the secreted. Functionally, could enhance the fertilizing capacity of bull spermatozoa upon interaction with heparin-like glycosaminoglycans present in the female genital tract. Exhibits both simulatory and inhibitory actions on the release of pituitary gonadotropins. Binds to heparin and gelatin. The protein is Seminal plasma protein PDC-109 of Bos indicus (Zebu).